The following is a 139-amino-acid chain: Protein archease (139 aa).

Ca(2+)-binding residues include Asp12, Asp138, and Ile139.

Belongs to the archease family.

Functionally, activates the tRNA-splicing ligase complex by facilitating the enzymatic turnover of catalytic subunit RtcB. Acts by promoting the guanylylation of RtcB, a key intermediate step in tRNA ligation. Can also alter the NTP specificity of RtcB such that ATP, dGTP or ITP is used efficiently. The polypeptide is Protein archease (Saccharolobus islandicus (strain Y.G.57.14 / Yellowstone #1) (Sulfolobus islandicus)).